A 364-amino-acid chain; its full sequence is GDSL esterase/lipase At1g29660 (364 aa).

A signal peptide spans 1 to 26 (MESYLRKWCLVSVWVLLLGLGFKVKA). Residue Ser-39 is the Nucleophile of the active site. Active-site charge relay system residues include Asp-328 and His-331.

Belongs to the 'GDSL' lipolytic enzyme family. In terms of tissue distribution, found in phloem exudates.

Its subcellular location is the secreted. The protein resides in the extracellular space. It is found in the apoplast. In terms of biological role, involved in EDS1-dependent systemic acquired resistance, maybe in phloem-mediated long-distance signaling. This chain is GDSL esterase/lipase At1g29660, found in Arabidopsis thaliana (Mouse-ear cress).